The following is a 278-amino-acid chain: Pantothenate synthetase (278 aa).

30 to 37 provides a ligand contact to ATP; the sequence is MGGLHQGH. The active-site Proton donor is the histidine 37. Glutamine 61 contacts (R)-pantoate. Glutamine 61 is a beta-alanine binding site. Residue 146–149 coordinates ATP; it reads GQKD. Glutamine 152 lines the (R)-pantoate pocket. ATP is bound by residues isoleucine 175 and 183-186; that span reads MSTR.

The protein belongs to the pantothenate synthetase family. In terms of assembly, homodimer.

It localises to the cytoplasm. The catalysed reaction is (R)-pantoate + beta-alanine + ATP = (R)-pantothenate + AMP + diphosphate + H(+). Its pathway is cofactor biosynthesis; (R)-pantothenate biosynthesis; (R)-pantothenate from (R)-pantoate and beta-alanine: step 1/1. Functionally, catalyzes the condensation of pantoate with beta-alanine in an ATP-dependent reaction via a pantoyl-adenylate intermediate. In Ruthia magnifica subsp. Calyptogena magnifica, this protein is Pantothenate synthetase.